Consider the following 23-residue polypeptide: Profilin (23 aa).

The protein belongs to the profilin family. As to quaternary structure, occurs in many kinds of cells as a complex with monomeric actin in a 1:1 ratio.

The protein localises to the cytoplasm. The protein resides in the cytoskeleton. Binds to actin and affects the structure of the cytoskeleton. At high concentrations, profilin prevents the polymerization of actin, whereas it enhances it at low concentrations. By binding to PIP2, it inhibits the formation of IP3 and DG. In Beta vulgaris (Sugar beet), this protein is Profilin.